A 50-amino-acid polypeptide reads, in one-letter code: Small, acid-soluble spore protein K (50 aa).

The interval 1–50 (MVRNKAKGFPNQNNNKFEGEPRAKDDYASKRADGSINSHPQERMRASGRR) is disordered. Basic and acidic residues-rich tracts occupy residues 17–33 (FEGE…KRAD) and 40–50 (PQERMRASGRR).

The protein belongs to the SspK family.

The protein resides in the spore core. The chain is Small, acid-soluble spore protein K from Bacillus velezensis (strain DSM 23117 / BGSC 10A6 / LMG 26770 / FZB42) (Bacillus amyloliquefaciens subsp. plantarum).